Reading from the N-terminus, the 606-residue chain is Elongation factor 4 (606 aa).

One can recognise a tr-type G domain in the interval 7–189 (SRIRNFCIIA…AVVDRVPPPK (183 aa)). GTP contacts are provided by residues 19-24 (DHGKST) and 136-139 (NKID).

Belongs to the TRAFAC class translation factor GTPase superfamily. Classic translation factor GTPase family. LepA subfamily.

Its subcellular location is the cell inner membrane. The catalysed reaction is GTP + H2O = GDP + phosphate + H(+). In terms of biological role, required for accurate and efficient protein synthesis under certain stress conditions. May act as a fidelity factor of the translation reaction, by catalyzing a one-codon backward translocation of tRNAs on improperly translocated ribosomes. Back-translocation proceeds from a post-translocation (POST) complex to a pre-translocation (PRE) complex, thus giving elongation factor G a second chance to translocate the tRNAs correctly. Binds to ribosomes in a GTP-dependent manner. This is Elongation factor 4 from Synechococcus sp. (strain CC9605).